The following is a 118-amino-acid chain: Holo-[acyl-carrier-protein] synthase (118 aa).

Mg(2+)-binding residues include Asp9 and Glu52.

This sequence belongs to the P-Pant transferase superfamily. AcpS family. It depends on Mg(2+) as a cofactor.

Its subcellular location is the cytoplasm. It catalyses the reaction apo-[ACP] + CoA = holo-[ACP] + adenosine 3',5'-bisphosphate + H(+). Transfers the 4'-phosphopantetheine moiety from coenzyme A to a Ser of acyl-carrier-protein. This Frankia alni (strain DSM 45986 / CECT 9034 / ACN14a) protein is Holo-[acyl-carrier-protein] synthase.